The sequence spans 502 residues: ATP synthase subunit beta, chloroplastic (502 aa).

Phosphoserine is present on Ser17. Gly176–Thr183 contacts ATP.

The protein belongs to the ATPase alpha/beta chains family. F-type ATPases have 2 components, CF(1) - the catalytic core - and CF(0) - the membrane proton channel. CF(1) has five subunits: alpha(3), beta(3), gamma(1), delta(1), epsilon(1). CF(0) has four main subunits: a(1), b(1), b'(1) and c(9-12).

Its subcellular location is the plastid. It is found in the chloroplast thylakoid membrane. The catalysed reaction is ATP + H2O + 4 H(+)(in) = ADP + phosphate + 5 H(+)(out). In terms of biological role, produces ATP from ADP in the presence of a proton gradient across the membrane. The catalytic sites are hosted primarily by the beta subunits. This Lepidium virginicum (Virginia pepperweed) protein is ATP synthase subunit beta, chloroplastic.